A 449-amino-acid polypeptide reads, in one-letter code: C4-dicarboxylate transport protein (449 aa).

A run of 9 helical transmembrane segments spans residues 5 to 25, 45 to 65, 77 to 97, 149 to 169, 185 to 205, 231 to 251, 298 to 318, 332 to 352, and 353 to 373; these read AVFK…VSLG, LIKM…IAGM, LAVL…LIVV, GDML…HSFG, VLFG…FGAM, CVIF…FSII, GYSF…VFIA, TLLV…GSGF, and IVLA…LALI.

This sequence belongs to the dicarboxylate/amino acid:cation symporter (DAACS) (TC 2.A.23) family.

The protein resides in the cell inner membrane. Functionally, responsible for the transport of dicarboxylates such as succinate, fumarate, and malate from the periplasm across the membrane. In Dechloromonas aromatica (strain RCB), this protein is C4-dicarboxylate transport protein.